We begin with the raw amino-acid sequence, 1690 residues long: Trinucleotide repeat-containing gene 6C protein (1690 aa).

Composition is skewed to polar residues over residues 1–12, 19–36, and 160–183; these read MATGSAQSSFPS, GSHG…NQSA, and AEPQ…NTDG. Disordered stretches follow at residues 1–42, 158–202, 226–848, and 863–928; these read MATG…AGGT, ESAE…AMQT, PGAN…EPVV, and CKPA…TPGK. The segment at 1-921 is sufficient for interaction with argonaute family proteins; that stretch reads MATGSAQSSF…GNTSKKGLQK (921 aa). Over residues 184–198 the composition is skewed to low complexity; sequence PNNTNPMNSSPNPIN. Residues 255 to 288 are compositionally biased toward polar residues; sequence NPATGSTNCGFSQGNGDTVNSALSAKQNGSSSAV. Arg313 carries the post-translational modification Omega-N-methylarginine. Residues 362-374 show a composition bias toward polar residues; the sequence is GWDSASAASQTPA. Low complexity predominate over residues 384-404; it reads SWAKATSSGTTASEGSSDGSG. Basic and acidic residues predominate over residues 415-426; that stretch reads GTGEGRRRDKGV. A compositionally biased stretch (polar residues) spans 444–459; that stretch reads LSNSGWGQTPVKQNTA. A compositionally biased stretch (basic and acidic residues) spans 464 to 474; it reads ESPRSERKNDN. The residue at position 465 (Ser465) is a Phosphoserine. 5 stretches are compositionally biased toward polar residues: residues 482-510, 519-530, 540-551, 644-656, and 663-678; these read IATQ…SGWV, ANTSWGDSNNKA, SISSTAVNNAAA, GTNA…TNWG, and PQQN…NVSN. Ser714 bears the Phosphoserine mark. Over residues 754-771 the composition is skewed to low complexity; it reads SSTTAPATPTTPTSSSTT. Thr776 carries the post-translational modification Phosphothreonine. Polar residues predominate over residues 778 to 788; that stretch reads PSHQAGTQLNR. A compositionally biased stretch (low complexity) spans 901–915; it reads SQESSSSCSSWGNTS. The UBA domain occupies 928–973; the sequence is KQDEAWIMSRLIKQLTDMGFPREPAEEALKSNSMNLDQAMSALLEK. Ser1006 carries the post-translational modification Phosphoserine. A coiled-coil region spans residues 1156–1214; the sequence is QLQLAYQRLQIQQQMLQAQRNVSGPMRQQEQQVARTITNLQQQIQQHQRQLAQALLVKQ. 5 disordered regions span residues 1212 to 1337, 1351 to 1380, 1397 to 1421, 1441 to 1486, and 1600 to 1625; these read VKQP…PPGK, QNSE…ISNG, GLQN…PTIN, IKST…PSST, and PPTS…THGL. Residues 1214–1223 show a composition bias toward pro residues; that stretch reads QPPPPPPPPH. A silencing domain; interaction with CNOT1 and PAN3 region spans residues 1260 to 1690; sequence NTFAPYPLAG…PGDLLSGESI (431 aa). Residues 1272-1321 show a composition bias toward polar residues; that stretch reads PNMNVNSIDMSSGLSVKDPSQSQSRLPQWTHPNSMGNLSSAASPLDQNPS. The tract at residues 1371-1417 is required for interaction with PABPC1; sequence KSDSDKISNGSSISWPPEFHPGVPWKGLQNIDPENDPDVTPGSVPTG. The sufficient for translational repression when tethered to a target mRNA stretch occupies residues 1371 to 1690; that stretch reads KSDSDKISNG…PGDLLSGESI (320 aa). The PABPC1-interacting motif-2 (PAM2) stretch occupies residues 1381 to 1399; that stretch reads SSISWPPEFHPGVPWKGLQ. A compositionally biased stretch (polar residues) spans 1441–1457; sequence IKSTWSSGPASHTQASL. The 68-residue stretch at 1565-1632 folds into the RRM domain; it reads AQKSLHMCVL…HGLVRSDTAH (68 aa). The tract at residues 1596–1690 is interaction with the CCR4-NOT complex; sequence GQALPPTSSW…PGDLLSGESI (95 aa). The span at 1603-1613 shows a compositional bias: low complexity; the sequence is SSWQSSSGGSQ.

Belongs to the GW182 family. Interacts with one or more of the argonaute family proteins AGO1, AGO2, AGO3 and AGO4. Interacts with CNOT1; the interaction mediates the association with the CCR4-NOT complex. Interacts with PAN3; the interaction mediates the association with the PAN complex.

Functionally, plays a role in RNA-mediated gene silencing by micro-RNAs (miRNAs). Required for miRNA-dependent translational repression of complementary mRNAs by argonaute family proteins As scaffoldng protein associates with argonaute proteins bound to partially complementary mRNAs and simultaneously can recruit CCR4-NOT and PAN deadenylase complexes. This Mus musculus (Mouse) protein is Trinucleotide repeat-containing gene 6C protein (Tnrc6c).